A 50-amino-acid polypeptide reads, in one-letter code: Large ribosomal subunit protein bL33 (50 aa).

The protein belongs to the bacterial ribosomal protein bL33 family.

The chain is Large ribosomal subunit protein bL33 from Mycoplasmopsis synoviae (strain 53) (Mycoplasma synoviae).